Here is a 972-residue protein sequence, read N- to C-terminus: Translation initiation factor IF-2 (972 aa).

Over residues 48 to 63 (DHLRKSHGATDGDKRK) the composition is skewed to basic and acidic residues. 2 disordered regions span residues 48 to 85 (DHLR…KART) and 99 to 385 (RDDV…QAPT). Residues 105–114 (GAEQGQAQVA) are compositionally biased toward low complexity. Positions 121 to 181 (ELKRREEEAR…EEEAAAKRVA (61 aa)) are enriched in basic and acidic residues. The segment covering 182–205 (AEAAAAQQQAAAQQAAAAEQQEAA) has biased composition (low complexity). Residues 212–263 (DEARAAAERAAQREAAKKAEDAAREAADKARAEQEEISKRRAAAEAEARAIR) show a composition bias toward basic and acidic residues. The segment covering 279–288 (PPKPVEPPKP) has biased composition (pro residues). Over residues 313-328 (PAGAAAPATTAPAGAG) the composition is skewed to low complexity. The segment covering 357-370 (SSGGVDRGWRGGPK) has biased composition (gly residues). The tr-type G domain maps to 472–641 (PRPPVVTVMG…LLQAEVLELK (170 aa)). Positions 481 to 488 (GHVDHGKT) are G1. GTP is bound at residue 481–488 (GHVDHGKT). Residues 506–510 (GITQH) are G2. The segment at 527–530 (DTPG) is G3. Residues 527-531 (DTPGH) and 581-584 (NKID) each bind GTP. The segment at 581–584 (NKID) is G4. A G5 region spans residues 617–619 (SAK).

The protein belongs to the TRAFAC class translation factor GTPase superfamily. Classic translation factor GTPase family. IF-2 subfamily.

It is found in the cytoplasm. Functionally, one of the essential components for the initiation of protein synthesis. Protects formylmethionyl-tRNA from spontaneous hydrolysis and promotes its binding to the 30S ribosomal subunits. Also involved in the hydrolysis of GTP during the formation of the 70S ribosomal complex. This Burkholderia lata (strain ATCC 17760 / DSM 23089 / LMG 22485 / NCIMB 9086 / R18194 / 383) protein is Translation initiation factor IF-2.